The following is a 164-amino-acid chain: Crossover junction endodeoxyribonuclease RuvC (164 aa).

Catalysis depends on residues D7, E67, and D140. Positions 7, 67, and 140 each coordinate Mg(2+).

Belongs to the RuvC family. In terms of assembly, homodimer which binds Holliday junction (HJ) DNA. The HJ becomes 2-fold symmetrical on binding to RuvC with unstacked arms; it has a different conformation from HJ DNA in complex with RuvA. In the full resolvosome a probable DNA-RuvA(4)-RuvB(12)-RuvC(2) complex forms which resolves the HJ. It depends on Mg(2+) as a cofactor.

It localises to the cytoplasm. The enzyme catalyses Endonucleolytic cleavage at a junction such as a reciprocal single-stranded crossover between two homologous DNA duplexes (Holliday junction).. The RuvA-RuvB-RuvC complex processes Holliday junction (HJ) DNA during genetic recombination and DNA repair. Endonuclease that resolves HJ intermediates. Cleaves cruciform DNA by making single-stranded nicks across the HJ at symmetrical positions within the homologous arms, yielding a 5'-phosphate and a 3'-hydroxyl group; requires a central core of homology in the junction. The consensus cleavage sequence is 5'-(A/T)TT(C/G)-3'. Cleavage occurs on the 3'-side of the TT dinucleotide at the point of strand exchange. HJ branch migration catalyzed by RuvA-RuvB allows RuvC to scan DNA until it finds its consensus sequence, where it cleaves and resolves the cruciform DNA. The chain is Crossover junction endodeoxyribonuclease RuvC from Chloroflexus aurantiacus (strain ATCC 29364 / DSM 637 / Y-400-fl).